The following is an 86-amino-acid chain: MGILIPLVSVSAFWAIIGFGGPWIVPKGPNRGIIQLMIIMTAVCCWMFWIMVFLHQLNPLIGPQINVKTIRWISEKWGDAPNVINN.

The chain crosses the membrane as a helical span at residues 1-21; the sequence is MGILIPLVSVSAFWAIIGFGG. Over 22–32 the chain is Cytoplasmic; that stretch reads PWIVPKGPNRG. The helical transmembrane segment at 33-53 threads the bilayer; the sequence is IIQLMIIMTAVCCWMFWIMVF. The Lumenal segment spans residues 54-86; the sequence is LHQLNPLIGPQINVKTIRWISEKWGDAPNVINN.

It belongs to the V-ATPase e1/e2 subunit family. As to quaternary structure, V-ATPase is a heteromultimeric enzyme made up of two complexes: the ATP-hydrolytic V1 complex and the proton translocation V0 complex. The V1 complex consists of three catalytic AB heterodimers that form a heterohexamer, three peripheral stalks each consisting of EG heterodimers, one central rotor including subunits D and F, and the regulatory subunits C and H. The proton translocation complex V0 consists of the proton transport subunit a, a ring of proteolipid subunits c9c'', rotary subunit d, subunits e and f, and the accessory subunits vah-19/Ac45 and vah-20/PRR.

It is found in the apical cell membrane. Functionally, subunit of the V0 complex of vacuolar(H+)-ATPase (V-ATPase), a multisubunit enzyme composed of a peripheral complex (V1) that hydrolyzes ATP and a membrane integral complex (V0) that translocates protons. V-ATPase is responsible for acidifying and maintaining the pH of intracellular compartments and in some cell types, is targeted to the plasma membrane, where it is responsible for acidifying the extracellular environment. During embryonic development, the V-ATPase is required to repress fusion of epidermal cells probably by negatively regulating eff-1-mediated cell fusion. The polypeptide is V-type proton ATPase subunit e (Caenorhabditis elegans).